We begin with the raw amino-acid sequence, 108 residues long: Thioredoxin (108 aa).

The Thioredoxin domain maps to N2–K108. C32 and C35 are joined by a disulfide.

This sequence belongs to the thioredoxin family.

Functionally, participates in various redox reactions through the reversible oxidation of its active center dithiol to a disulfide and catalyzes dithiol-disulfide exchange reactions. This Buchnera aphidicola subsp. Schizaphis graminum (strain Sg) protein is Thioredoxin (trxA).